Consider the following 271-residue polypeptide: Cyanophycinase (271 aa).

Catalysis depends on charge relay system residues Ser132, His174, and Glu201.

The protein belongs to the peptidase S51 family. As to quaternary structure, homodimer.

It carries out the reaction [L-4-(L-arginin-2-N-yl)aspartate](n) + H2O = [L-4-(L-arginin-2-N-yl)aspartate](n-1) + L-4-(L-arginin-2-N-yl)aspartate. Exopeptidase that catalyzes the hydrolytic cleavage of multi-L-arginyl-poly-L-aspartic acid (cyanophycin; a water-insoluble reserve polymer) into aspartate-arginine dipeptides. The sequence is that of Cyanophycinase (cphB) from Synechocystis sp. (strain ATCC 27184 / PCC 6803 / Kazusa).